A 251-amino-acid chain; its full sequence is Hydroxyacylglutathione hydrolase (251 aa).

Histidine 53, histidine 55, aspartate 57, histidine 58, histidine 110, aspartate 127, and histidine 165 together coordinate Zn(2+).

This sequence belongs to the metallo-beta-lactamase superfamily. Glyoxalase II family. In terms of assembly, monomer. Requires Zn(2+) as cofactor.

The catalysed reaction is an S-(2-hydroxyacyl)glutathione + H2O = a 2-hydroxy carboxylate + glutathione + H(+). It functions in the pathway secondary metabolite metabolism; methylglyoxal degradation; (R)-lactate from methylglyoxal: step 2/2. Functionally, thiolesterase that catalyzes the hydrolysis of S-D-lactoyl-glutathione to form glutathione and D-lactic acid. This chain is Hydroxyacylglutathione hydrolase, found in Pectobacterium atrosepticum (strain SCRI 1043 / ATCC BAA-672) (Erwinia carotovora subsp. atroseptica).